Reading from the N-terminus, the 137-residue chain is MPNFAGTWKMKSSENFDELLKALGVNAMLRKLAVTAASKPHVEIQQNGEQFYIRTYTTIRTTEINFHIGEEFNEETVDGRKCKSLATWETENKMYCKQTLLSGNGPKTFWTRELRGDELILTFGADDVVCTRIYMRA.

Positions 21-31 match the Nuclear localization signal motif; that stretch reads KALGVNAMLRK. All-trans-retinoate is bound at residue 132–134; that stretch reads RIY.

This sequence belongs to the calycin superfamily. Fatty-acid binding protein (FABP) family.

It localises to the cytoplasm. Functionally, cytosolic CRABPs may regulate the access of retinoic acid to the nuclear retinoic acid receptors. In Hippocampus comes (Tiger tail seahorse), this protein is Cellular retinoic acid-binding protein 1 (crabp1).